A 537-amino-acid chain; its full sequence is MFS-type transporter qa-x (537 aa).

Topologically, residues methionine 1 to alanine 26 are cytoplasmic. The helical transmembrane segment at isoleucine 27–alanine 47 threads the bilayer. Topologically, residues leucine 48–serine 74 are extracellular. Residues valine 75 to glycine 95 form a helical membrane-spanning segment. The Cytoplasmic portion of the chain corresponds to arginine 96 to lysine 98. A helical membrane pass occupies residues serine 99–glycine 119. Residues glutamine 120 to arginine 131 lie on the Extracellular side of the membrane. Residues valine 132–leucine 152 form a helical membrane-spanning segment. The Cytoplasmic segment spans residues alanine 153–arginine 160. The helical transmembrane segment at leucine 161–tyrosine 181 threads the bilayer. Topologically, residues glycine 182–leucine 195 are extracellular. An N-linked (GlcNAc...) asparagine glycan is attached at asparagine 184. A helical transmembrane segment spans residues isoleucine 196–proline 216. Topologically, residues glutamate 217 to arginine 285 are cytoplasmic. A helical transmembrane segment spans residues phenylalanine 286–tyrosine 306. Topologically, residues tyrosine 307 to threonine 327 are extracellular. Residues glycine 328–valine 349 traverse the membrane as a helical segment. The Cytoplasmic segment spans residues glycine 350–arginine 352. The helical transmembrane segment at arginine 353–isoleucine 373 threads the bilayer. Topologically, residues lysine 374–threonine 389 are extracellular. The helical transmembrane segment at serine 390 to tryptophan 410 threads the bilayer. Residues asparagine 411 to alanine 435 are Cytoplasmic-facing. A helical transmembrane segment spans residues alanine 436–methionine 456. The Extracellular segment spans residues glutamate 457 to tyrosine 458. The helical transmembrane segment at glycine 459–leucine 479 threads the bilayer. Residues proline 480–valine 537 lie on the Cytoplasmic side of the membrane. Positions arginine 514 to threonine 531 are enriched in basic and acidic residues. The interval arginine 514–valine 537 is disordered.

This sequence belongs to the major facilitator superfamily. Sugar transporter (TC 2.A.1.1) family.

It is found in the membrane. Functionally, MFS-type transporter; part of the qa gene cluster that mediates the catabolism of quinic acid (QA) and as such, allows the use of QA as a sole carbon source. Involved in the upatke of QA. The qa cluster encodes 3 inducible enymes (qa-2, qa-3 and qa-4) catalyzing the first three reactions in the catabolism of quinic acid to protocatechuic acid (also known as 3,4-Dihydroxybenzoic acid). The chain is MFS-type transporter qa-x from Neurospora crassa (strain ATCC 24698 / 74-OR23-1A / CBS 708.71 / DSM 1257 / FGSC 987).